The chain runs to 414 residues: uncharacterized protein (414 aa).

The protein belongs to the glycosyltransferase 28 family.

This is an uncharacterized protein from Mycobacterium tuberculosis (strain CDC 1551 / Oshkosh).